Here is a 337-residue protein sequence, read N- to C-terminus: HTH-type transcriptional regulator DegA (337 aa).

An HTH lacI-type domain is found at 1–57 (MKTTIYDVAKAAGVSITTVSRVINNTGRISDKTRQKVMNVMNEMAYTPNVHAAALTG). A DNA-binding region (H-T-H motif) is located at residues 5 to 24 (IYDVAKAAGVSITTVSRVIN). The disordered stretch occupies residues 300–319 (AERHRTAGRSNRGKRKAKQK).

Its function is as follows. Involved in the control of degradation of B.subtilis amidophosphoribosyltransferase (purF). Probably activates the gene for a degradative protease. The sequence is that of HTH-type transcriptional regulator DegA (degA) from Bacillus subtilis (strain 168).